A 325-amino-acid chain; its full sequence is Aldo-keto reductase family 1 member A1 (325 aa).

An N-acetylthreonine modification is found at threonine 2. Serine 4 is modified (phosphoserine). NADP(+) is bound by residues 11–20 (GQKMPLIGLG), threonine 21, and tryptophan 22. Position 38 is a phosphoserine (serine 38). Aspartate 45 contacts NADP(+). Tyrosine 50 (proton donor) is an active-site residue. Lysine 127 bears the N6-acetyllysine; alternate mark. Lysine 127 bears the N6-succinyllysine; alternate mark. The residue at position 145 (lysine 145) is an N6-succinyllysine. 12 residues coordinate NADP(+): serine 162, asparagine 163, serine 211, leucine 213, serine 215, serine 216, lysine 263, serine 264, isoleucine 265, arginine 269, glutamine 272, and asparagine 273. Serine 211 bears the Phosphoserine mark.

The protein belongs to the aldo/keto reductase family. Monomer. In terms of tissue distribution, widely expressed.

Its subcellular location is the cytoplasm. It is found in the cytosol. The protein localises to the apical cell membrane. It catalyses the reaction a primary alcohol + NADP(+) = an aldehyde + NADPH + H(+). The enzyme catalyses L-gulonate + NADP(+) = aldehydo-D-glucuronate + NADPH + H(+). It carries out the reaction L-gulono-1,4-lactone + NADP(+) = D-glucurono-3,6-lactone + NADPH + H(+). The catalysed reaction is allyl alcohol + NADP(+) = acrolein + NADPH + H(+). It catalyses the reaction glycerol + NADP(+) = D-glyceraldehyde + NADPH + H(+). The enzyme catalyses glycerol + NADP(+) = L-glyceraldehyde + NADPH + H(+). It carries out the reaction hydroxyacetone + NADP(+) = methylglyoxal + NADPH + H(+). The catalysed reaction is 3-deoxyfructose + NADP(+) = 3-deoxyglucosone + NADPH + H(+). It catalyses the reaction (R)-mevalonate + NADP(+) = (R)-mevaldate + NADPH + H(+). The enzyme catalyses pyridine 3-methanol + NADP(+) = pyridine-3-carbaldehyde + NADPH + H(+). It carries out the reaction S-nitroso-CoA + NADPH + H(+) = sulfinamide-CoA + NADP(+). The catalysed reaction is S-nitrosoglutathione + NADPH + H(+) = S-(hydroxysulfenamide)glutathione + NADP(+). Catalyzes the NADPH-dependent reduction of a wide variety of carbonyl-containing compounds to their corresponding alcohols. Displays enzymatic activity towards endogenous metabolites such as aromatic and aliphatic aldehydes, ketones, monosaccharides and bile acids, with a preference for negatively charged substrates, such as glucuronate and succinic semialdehyde. Plays an important role in ascorbic acid biosynthesis by catalyzing the reduction of D-glucuronic acid and D-glucurono-gamma-lactone. Functions as a detoxifiying enzyme by reducing a range of toxic aldehydes. Reduces methylglyoxal and 3-deoxyglucosone, which are present at elevated levels under hyperglycemic conditions and are cytotoxic. Involved in the detoxification of lipid-derived aldehydes like acrolein. Plays a role in the activation of procarcinogens, such as polycyclic aromatic hydrocarbon trans-dihydrodiols, and in the metabolism of various xenobiotics and drugs. Also acts as an inhibitor of protein S-nitrosylation by mediating degradation of S-nitroso-coenzyme A (S-nitroso-CoA), a cofactor required to S-nitrosylate proteins. S-nitroso-CoA reductase activity is involved in reprogramming intermediary metabolism in renal proximal tubules, notably by inhibiting protein S-nitrosylation of isoform 2 of PKM (PKM2). Also acts as a S-nitroso-glutathione reductase by catalyzing the NADPH-dependent reduction of S-nitrosoglutathione. Displays no reductase activity towards retinoids. This Mus musculus (Mouse) protein is Aldo-keto reductase family 1 member A1.